The chain runs to 484 residues: Glycogen synthase (484 aa).

Residue Lys-18 coordinates ADP-alpha-D-glucose.

It belongs to the glycosyltransferase 1 family. Bacterial/plant glycogen synthase subfamily.

It catalyses the reaction [(1-&gt;4)-alpha-D-glucosyl](n) + ADP-alpha-D-glucose = [(1-&gt;4)-alpha-D-glucosyl](n+1) + ADP + H(+). It participates in glycan biosynthesis; glycogen biosynthesis. Its function is as follows. Synthesizes alpha-1,4-glucan chains using ADP-glucose. The sequence is that of Glycogen synthase from Vibrio cholerae serotype O1 (strain ATCC 39541 / Classical Ogawa 395 / O395).